The primary structure comprises 416 residues: S-adenosylmethionine synthase (416 aa).

An ATP-binding site is contributed by His14. Asp16 serves as a coordination point for Mg(2+). Glu42 serves as a coordination point for K(+). Glu55 and Gln98 together coordinate L-methionine. The flexible loop stretch occupies residues 98-108 (QSPDIARGVDT). ATP is bound by residues 173-175 (DGK), 249-250 (KF), Asp258, 264-265 (RK), Ala281, and Lys285. L-methionine is bound at residue Asp258. Lys289 contributes to the L-methionine binding site.

The protein belongs to the AdoMet synthase family. In terms of assembly, homotetramer; dimer of dimers. Mg(2+) is required as a cofactor. K(+) serves as cofactor.

It localises to the cytoplasm. It carries out the reaction L-methionine + ATP + H2O = S-adenosyl-L-methionine + phosphate + diphosphate. It functions in the pathway amino-acid biosynthesis; S-adenosyl-L-methionine biosynthesis; S-adenosyl-L-methionine from L-methionine: step 1/1. In terms of biological role, catalyzes the formation of S-adenosylmethionine (AdoMet) from methionine and ATP. The overall synthetic reaction is composed of two sequential steps, AdoMet formation and the subsequent tripolyphosphate hydrolysis which occurs prior to release of AdoMet from the enzyme. This chain is S-adenosylmethionine synthase, found in Thermosynechococcus vestitus (strain NIES-2133 / IAM M-273 / BP-1).